The chain runs to 327 residues: MQQLEEVVGQARAEIEGVSDIAALDEIRVKYLGKKGFFTEQMKGLGALSAEERPAAGAVINQAKQQVQDALNERREALEIAVLNQKLAAETIDVSLPGRRIENGGLHPVTRTIERIERLFGEMGFKVARGPEIEDGFHNFDALNIPAHHPARTDHDTFYFNPDLMLRTHTSGVQIRTMEHQQPPIRIIAPGRVYRNDYDMTHTPMFHQVEGLLVDEHASFTELKGILHDFLRNYFEEDLTIRFRPSYFPFTEPSAEVDVMGKNGKWLEVLGCGMVHPNVLRSVGIDPEKYSGFAFGMGVERLTMLRYGVNDLRAFFENDLRFLKQFK.

Mg(2+) is bound at residue Glu-252.

The protein belongs to the class-II aminoacyl-tRNA synthetase family. Phe-tRNA synthetase alpha subunit type 1 subfamily. Tetramer of two alpha and two beta subunits. Mg(2+) is required as a cofactor.

Its subcellular location is the cytoplasm. It catalyses the reaction tRNA(Phe) + L-phenylalanine + ATP = L-phenylalanyl-tRNA(Phe) + AMP + diphosphate + H(+). This is Phenylalanine--tRNA ligase alpha subunit from Aeromonas hydrophila subsp. hydrophila (strain ATCC 7966 / DSM 30187 / BCRC 13018 / CCUG 14551 / JCM 1027 / KCTC 2358 / NCIMB 9240 / NCTC 8049).